The sequence spans 264 residues: Ribosomal RNA small subunit methyltransferase A (264 aa).

The S-adenosyl-L-methionine site is built by histidine 15, leucine 17, glycine 42, glutamate 63, aspartate 88, and asparagine 109.

Belongs to the class I-like SAM-binding methyltransferase superfamily. rRNA adenine N(6)-methyltransferase family. RsmA subfamily.

The protein localises to the cytoplasm. It carries out the reaction adenosine(1518)/adenosine(1519) in 16S rRNA + 4 S-adenosyl-L-methionine = N(6)-dimethyladenosine(1518)/N(6)-dimethyladenosine(1519) in 16S rRNA + 4 S-adenosyl-L-homocysteine + 4 H(+). Functionally, specifically dimethylates two adjacent adenosines (A1518 and A1519) in the loop of a conserved hairpin near the 3'-end of 16S rRNA in the 30S particle. May play a critical role in biogenesis of 30S subunits. This chain is Ribosomal RNA small subunit methyltransferase A, found in Nitrosococcus oceani (strain ATCC 19707 / BCRC 17464 / JCM 30415 / NCIMB 11848 / C-107).